The primary structure comprises 949 residues: Copper-transporting ATPase PAA1, chloroplastic (949 aa).

A chloroplast-targeting transit peptide spans 1–103 (MESTLSAFST…SSSPSFRSIS (103 aa)). The span at 113–126 (YNGGSGGGGGGGSE) shows a compositional bias: gly residues. Residues 113 to 142 (YNGGSGGGGGGGSESGDSKSKLGANASDGV) form a disordered region. In terms of domain architecture, HMA spans 148-222 (DIIILDVGGM…HLTNCGFQST (75 aa)). Cu(+) contacts are provided by C159 and C162. A run of 6 helical transmembrane segments spans residues 253-274 (LAVS…FLGV), 287-306 (FHVS…LVLD), 314-334 (GSPN…SVSS), 349-369 (EEPV…QRAK), 502-524 (VAGR…WNLF), and 543-560 (LQLS…ALGL). The active-site 4-aspartylphosphate intermediate is D598. Residue 807-814 (GDGINDAA) participates in ATP binding. Mg(2+) is bound by residues D808 and D812. The next 2 helical transmembrane spans lie at 863–882 (KQNL…IAAG) and 895–913 (SMAG…TNSL). A disordered region spans residues 925–949 (DKNVKPEPKEGTKQPHENTRWKQSS).

It belongs to the cation transport ATPase (P-type) (TC 3.A.3) family. Type IB subfamily. As to expression, expressed in the shoots and roots.

The protein resides in the plastid. Its subcellular location is the chloroplast membrane. It catalyses the reaction Cu(+)(in) + ATP + H2O = Cu(+)(out) + ADP + phosphate + H(+). Its function is as follows. Mediates copper transfer across the plastid envelope. Required for the delivery of copper into the plastid stroma, which is essential for the function of copper proteins. Seems to be selective for monovalent copper Cu(+) transport. Also plays a role in glucose signaling-mediated cell proliferation of root meristem in non-green tissues. This Arabidopsis thaliana (Mouse-ear cress) protein is Copper-transporting ATPase PAA1, chloroplastic (PAA1).